The following is a 617-amino-acid chain: Serine/threonine-protein kinase par-4 (617 aa).

The segment covering 1–11 has biased composition (polar residues); sequence MDAPSTSSGAQ. Residues 1–59 form a disordered region; that stretch reads MDAPSTSSGAQSKLLMPGDDEADEDHQNRGDPNLQQKQKIQLNVDPDYDDDEDDDCFID. Over residues 46–57 the composition is skewed to acidic residues; the sequence is PDYDDDEDDDCF. A Protein kinase domain is found at 183 to 446; sequence YMWGGQIGTG…CLETMIHPWF (264 aa). ATP contacts are provided by residues 189-197 and Lys212; that span reads IGTGSYGKV. Asp310 acts as the Proton acceptor in catalysis. The interval 523–617 is disordered; the sequence is LEAKPGDGPD…CIFRSRTDSA (95 aa). Over residues 587–597 the composition is skewed to pro residues; the sequence is DPPPTAAPGAP.

The protein belongs to the protein kinase superfamily. CAMK Ser/Thr protein kinase family. LKB1 subfamily. Interacts with strd-1. The cofactor is Mg(2+). Mn(2+) is required as a cofactor. Expressed in the gonads, oocytes and early embryos (at protein level).

The protein resides in the cytoplasm. The protein localises to the cell cortex. It carries out the reaction L-seryl-[protein] + ATP = O-phospho-L-seryl-[protein] + ADP + H(+). The enzyme catalyses L-threonyl-[protein] + ATP = O-phospho-L-threonyl-[protein] + ADP + H(+). Functionally, required for cytoplasmic partitioning and asymmetric cell division in early embryogenesis. Controls the asymmetric cell division of the Q.p neuroblast lineage. Involved in mediating cell polarization via regulation of anillin family scaffold proteins. Phosphorylates and restricts the asymmetry effectors mex-5 and mex-6 to the anterior cytoplasm of the zygote and maintains these phosphorylations until fertilization. May phosphorylate par-1. Required for strd-1 localization to the cell cortex of early embryos and may be required for strd-1 protein stabilization. May regulate the integrity of the early embryonic cortex in a strd-1-dependent manner. Phosphorylates and regulates aak-2 in response to oxidative stress and during dauer development. May also play a role in motility, behavioral response, regulation of lifespan and dauer formation through this pathway. Required to establish germline stem cell (GSC) quiescence during dauer development. Acts downstream of unc-40 in dendrite outgrowth. May play a role in cell shedding during embryogenesis, probably by phosphorylating pig-1. The protein is Serine/threonine-protein kinase par-4 (par-4) of Caenorhabditis elegans.